A 424-amino-acid chain; its full sequence is O-methyltransferase aunD (424 aa).

Aspartate 275 provides a ligand contact to S-adenosyl-L-methionine. Residue histidine 326 is the Proton acceptor of the active site.

The protein belongs to the class I-like SAM-binding methyltransferase superfamily. Cation-independent O-methyltransferase family.

It participates in secondary metabolite biosynthesis. Functionally, O-methyltransferase; part of the gene cluster that mediates the biosynthesis of aurasperone B, a dimeric gamma-naphthopyrone. The first step in the biosynthesis of aurasperone B is the production of gamma-naphthopyrone precursor YWA1 by the non-reducing polyketide synthase albA, via condensation of one acetyl-CoA starter unit with 6 malonyl-CoA units. YWA1 is then methylated by aunE at position C-6 to yield foncesin which is further methylated at position C-8 by aunD to produce fonsecin B. A key enzyme in the biosynthetic pathway is the cytochrome P450 monooxygenase aunB which catalyzes the oxidative dimerization of fonsecin B to aurasperone B. AunB also catalyzes the oxidative dimerization of rubrofusarin B into aurasperone A. The polypeptide is O-methyltransferase aunD (Aspergillus niger (strain ATCC MYA-4892 / CBS 513.88 / FGSC A1513)).